The sequence spans 199 residues: Riboflavin synthase (199 aa).

2 Lumazine-binding repeats span residues 1–95 (MFSG…IGGH) and 96–188 (FVSG…VDTI). Residues 4 to 6 (GII), 46 to 48 (CLT), 60 to 65 (DVTEET), 99 to 101 (GHV), Lys-130, 139 to 141 (SLT), and 153 to 158 (SLIPET) each bind 2,4-dihydroxypteridine.

In terms of assembly, homotrimer.

It catalyses the reaction 2 6,7-dimethyl-8-(1-D-ribityl)lumazine + H(+) = 5-amino-6-(D-ribitylamino)uracil + riboflavin. The protein operates within cofactor biosynthesis; riboflavin biosynthesis; riboflavin from 2-hydroxy-3-oxobutyl phosphate and 5-amino-6-(D-ribitylamino)uracil: step 2/2. Functionally, catalyzes the dismutation of two molecules of 6,7-dimethyl-8-ribityllumazine, resulting in the formation of riboflavin and 5-amino-6-(D-ribitylamino)uracil. In Chlamydia trachomatis serovar D (strain ATCC VR-885 / DSM 19411 / UW-3/Cx), this protein is Riboflavin synthase (ribE).